A 318-amino-acid polypeptide reads, in one-letter code: Pantothenate kinase (318 aa).

96–103 is an ATP binding site; it reads GSVSVGKS.

Belongs to the prokaryotic pantothenate kinase family.

Its subcellular location is the cytoplasm. It catalyses the reaction (R)-pantothenate + ATP = (R)-4'-phosphopantothenate + ADP + H(+). It functions in the pathway cofactor biosynthesis; coenzyme A biosynthesis; CoA from (R)-pantothenate: step 1/5. This is Pantothenate kinase from Bradyrhizobium sp. (strain ORS 278).